Reading from the N-terminus, the 247-residue chain is uncharacterized protein (247 aa).

Composition is skewed to low complexity over residues 1-12 (MFSPQQPMRNYP) and 21-43 (PNQR…AQQQ). Disordered stretches follow at residues 1-43 (MFSP…AQQQ) and 157-247 (LSKS…RLYI). Basic and acidic residues-rich tracts occupy residues 170 to 196 (ESEK…DGNK) and 210 to 229 (KTTD…KKEA).

This is an uncharacterized protein from Bacillus subtilis (strain 168).